We begin with the raw amino-acid sequence, 508 residues long: Light-independent protochlorophyllide reductase subunit B (508 aa).

Asp-36 lines the [4Fe-4S] cluster pocket. The active-site Proton donor is the Asp-294. 429-430 provides a ligand contact to substrate; it reads GM.

Belongs to the ChlB/BchB/BchZ family. Protochlorophyllide reductase is composed of three subunits; ChlL, ChlN and ChlB. Forms a heterotetramer of two ChlB and two ChlN subunits. [4Fe-4S] cluster serves as cofactor.

The catalysed reaction is chlorophyllide a + oxidized 2[4Fe-4S]-[ferredoxin] + 2 ADP + 2 phosphate = protochlorophyllide a + reduced 2[4Fe-4S]-[ferredoxin] + 2 ATP + 2 H2O. It functions in the pathway porphyrin-containing compound metabolism; chlorophyll biosynthesis (light-independent). Its function is as follows. Component of the dark-operative protochlorophyllide reductase (DPOR) that uses Mg-ATP and reduced ferredoxin to reduce ring D of protochlorophyllide (Pchlide) to form chlorophyllide a (Chlide). This reaction is light-independent. The NB-protein (ChlN-ChlB) is the catalytic component of the complex. The polypeptide is Light-independent protochlorophyllide reductase subunit B (Gloeothece citriformis (strain PCC 7424) (Cyanothece sp. (strain PCC 7424))).